A 595-amino-acid polypeptide reads, in one-letter code: DNA damage-binding protein CMR1 (595 aa).

The interval 20-79 (ALLDSLGLDPAGASSPFGSSPAPTSNKTKPKPKPAPKKRKAAAVIAVDEGPRRRSGRIAG) is disordered. Low complexity predominate over residues 29-46 (PAGASSPFGSSPAPTSNK). A compositionally biased stretch (basic residues) spans 47–60 (TKPKPKPAPKKRKA). 4 WD repeats span residues 185-226 (VTNE…MEKP), 255-297 (HAKN…ELFS), 300-339 (DEDL…RESG), and 349-389 (GRGA…SISS). Residues 397–429 (AIEEEEEGTSTLSGQSSSLPHDTHPTRESDYST) are disordered. Over residues 405–415 (TSTLSGQSSSL) the composition is skewed to low complexity. The span at 417–426 (HDTHPTRESD) shows a compositional bias: basic and acidic residues. WD repeat units lie at residues 448-487 (QHGK…SLVD), 519-556 (LRAQ…VGLW), and 558-595 (DDVT…GDHI).

This sequence belongs to the WD repeat DDB2/WDR76 family.

Functionally, DNA-binding protein that binds to both single- and double-stranded DNA. Binds preferentially to UV-damaged DNA. May be involved in DNA-metabolic processes. The chain is DNA damage-binding protein CMR1 from Cryptococcus neoformans var. neoformans serotype D (strain B-3501A) (Filobasidiella neoformans).